Reading from the N-terminus, the 927-residue chain is Isoleucine--tRNA ligase (927 aa).

A 'HIGH' region motif is present at residues 57-67 (PFANGNIHMGH). Residue E553 coordinates L-isoleucyl-5'-AMP. The 'KMSKS' region motif lies at 594–598 (KMSKS). K597 is an ATP binding site. The Zn(2+) site is built by C886, C889, C906, and C909.

It belongs to the class-I aminoacyl-tRNA synthetase family. IleS type 1 subfamily. Monomer. The cofactor is Zn(2+).

It is found in the cytoplasm. It catalyses the reaction tRNA(Ile) + L-isoleucine + ATP = L-isoleucyl-tRNA(Ile) + AMP + diphosphate. In terms of biological role, catalyzes the attachment of isoleucine to tRNA(Ile). As IleRS can inadvertently accommodate and process structurally similar amino acids such as valine, to avoid such errors it has two additional distinct tRNA(Ile)-dependent editing activities. One activity is designated as 'pretransfer' editing and involves the hydrolysis of activated Val-AMP. The other activity is designated 'posttransfer' editing and involves deacylation of mischarged Val-tRNA(Ile). The protein is Isoleucine--tRNA ligase of Lactobacillus acidophilus (strain ATCC 700396 / NCK56 / N2 / NCFM).